A 115-amino-acid polypeptide reads, in one-letter code: Yop proteins translocation protein M (115 aa).

The interval 19 to 39 (HGGQAGRLTETNPLTENSHQI) is disordered. The segment covering 27 to 39 (TETNPLTENSHQI) has biased composition (polar residues).

Belongs to an operon involved in the translocation of Yop proteins across the bacterial membranes or in the specific control of this function. This chain is Yop proteins translocation protein M (yscM), found in Yersinia enterocolitica.